We begin with the raw amino-acid sequence, 608 residues long: UvrABC system protein C (608 aa).

One can recognise a GIY-YIG domain in the interval 16–94 (NRPGVYRMFD…IKEWRPPYNI (79 aa)). The UVR domain occupies 204–239 (NALADELNTGMEQAAMRLDFEKAAELRDQVAILRRV).

It belongs to the UvrC family. Interacts with UvrB in an incision complex.

It is found in the cytoplasm. Functionally, the UvrABC repair system catalyzes the recognition and processing of DNA lesions. UvrC both incises the 5' and 3' sides of the lesion. The N-terminal half is responsible for the 3' incision and the C-terminal half is responsible for the 5' incision. The chain is UvrABC system protein C from Pseudomonas paraeruginosa (strain DSM 24068 / PA7) (Pseudomonas aeruginosa (strain PA7)).